The chain runs to 197 residues: Methylamine utilization protein MauD (197 aa).

A helical membrane pass occupies residues 3–23; it reads FLIASNILLWIAFLGVTVVML. One can recognise a Thioredoxin domain in the interval 48 to 180; sequence PDIGDMAPEF…LESLLEADKT (133 aa).

The protein resides in the membrane. The protein operates within one-carbon metabolism; methylamine degradation. May be specifically involved in the processing, transport, and/or maturation of the MADH beta-subunit. The sequence is that of Methylamine utilization protein MauD (mauD) from Paracoccus versutus (Thiobacillus versutus).